The chain runs to 299 residues: Heterodisulfide reductase subunit B-like protein (299 aa).

The protein belongs to the HdrB family. The heterodisulfide reductase is composed of three subunits; HdlA, HdlB and HdlC. It forms a complex with the F420-non-reducing hydrogenase (Mvh), which provides the reducing equivalents to the heterodisulfide reductase.

It localises to the cytoplasm. Its function is as follows. Has oxidoreductase activity. The Hdl and Mvh subunits may together mediate electron transfer from hydrogen to an unidentified electron acceptor on the cytoplasmic side of the membrane. In Archaeoglobus profundus (strain DSM 5631 / JCM 9629 / NBRC 100127 / Av18), this protein is Heterodisulfide reductase subunit B-like protein (hdlB).